The following is a 224-amino-acid chain: Dehydration-responsive element-binding protein 1G (224 aa).

The span at methionine 1–proline 16 shows a compositional bias: polar residues. The disordered stretch occupies residues methionine 1 to lysine 46. Residues valine 54 to alanine 111 constitute a DNA-binding region (AP2/ERF). 2 disordered regions span residues alanine 139–threonine 161 and proline 200–tyrosine 224.

Belongs to the AP2/ERF transcription factor family. ERF subfamily.

The protein localises to the nucleus. Transcriptional activator that binds specifically to the DNA sequence 5'-[AG]CCGAC-3'. Binding to the C-repeat/DRE element mediates high salinity- and dehydration-inducible transcription. This Oryza sativa subsp. japonica (Rice) protein is Dehydration-responsive element-binding protein 1G (DREB1G).